A 156-amino-acid polypeptide reads, in one-letter code: Small ribosomal subunit protein uS7 (156 aa).

The protein belongs to the universal ribosomal protein uS7 family. In terms of assembly, part of the 30S ribosomal subunit. Contacts proteins S9 and S11.

Functionally, one of the primary rRNA binding proteins, it binds directly to 16S rRNA where it nucleates assembly of the head domain of the 30S subunit. Is located at the subunit interface close to the decoding center, probably blocks exit of the E-site tRNA. This is Small ribosomal subunit protein uS7 from Streptococcus sanguinis (strain SK36).